The chain runs to 544 residues: Methionine--tRNA ligase (544 aa).

The short motif at P10–H20 is the 'HIGH' region element. Zn(2+) is bound by residues C141, C144, C153, and C156. Positions K329–S333 match the 'KMSKS' region motif. Residue T332 participates in ATP binding.

It belongs to the class-I aminoacyl-tRNA synthetase family. MetG type 1 subfamily. As to quaternary structure, monomer. Requires Zn(2+) as cofactor.

The protein resides in the cytoplasm. The enzyme catalyses tRNA(Met) + L-methionine + ATP = L-methionyl-tRNA(Met) + AMP + diphosphate. In terms of biological role, is required not only for elongation of protein synthesis but also for the initiation of all mRNA translation through initiator tRNA(fMet) aminoacylation. In Bacillus cereus (strain G9842), this protein is Methionine--tRNA ligase.